The primary structure comprises 87 residues: Small ribosomal subunit protein bS20 (87 aa).

Positions 1–20 (MANIKSQIKRNKTNEKARLR) are disordered.

This sequence belongs to the bacterial ribosomal protein bS20 family.

Binds directly to 16S ribosomal RNA. The polypeptide is Small ribosomal subunit protein bS20 (Corynebacterium efficiens (strain DSM 44549 / YS-314 / AJ 12310 / JCM 11189 / NBRC 100395)).